We begin with the raw amino-acid sequence, 419 residues long: L-rhamnose isomerase (419 aa).

Mn(2+)-binding residues include His262, Asp294, and Asp296.

Belongs to the rhamnose isomerase family. Homotetramer. Mn(2+) is required as a cofactor.

It is found in the cytoplasm. It catalyses the reaction L-rhamnopyranose = L-rhamnulose. The protein operates within carbohydrate degradation; L-rhamnose degradation; glycerone phosphate from L-rhamnose: step 1/3. Functionally, catalyzes the interconversion of L-rhamnose and L-rhamnulose. The chain is L-rhamnose isomerase from Enterobacter sp. (strain 638).